An 89-amino-acid chain; its full sequence is Class I hydrophobin C (89 aa).

A signal peptide spans 1 to 16 (MKFSLATIALAAAVAA). Cystine bridges form between Cys-28-Cys-68, Cys-39-Cys-60, Cys-40-Cys-52, and Cys-69-Cys-85. N-linked (GlcNAc...) asparagine glycosylation occurs at Asn-36.

Belongs to the fungal hydrophobin family.

It is found in the secreted. It localises to the cell wall. The protein resides in the vacuole. Its subcellular location is the cytoplasmic vesicle. Functionally, aerial growth, conidiation, and dispersal of filamentous fungi in the environment rely upon a capability of their secreting small amphipathic proteins called hydrophobins (HPBs) with low sequence identity. Class I can self-assemble into an outermost layer of rodlet bundles on aerial cell surfaces, conferring cellular hydrophobicity that supports fungal growth, development and dispersal; whereas Class II form highly ordered films at water-air interfaces through intermolecular interactions but contribute nothing to the rodlet structure. Hyd1C contributes to certain cell wall-related features, such as hydrophobicity but is not involved in cell wall-related events during fungal proliferation in host hemocoel. Does not contribute to conidial hydrophobicity. The polypeptide is Class I hydrophobin C (Beauveria bassiana (strain ARSEF 2860) (White muscardine disease fungus)).